The primary structure comprises 553 residues: Solute carrier family 45 member 3 (553 aa).

The next 11 helical transmembrane spans lie at 19–39 (LLVNLLTFGLEVCLAAGITYV), 52–72 (FMTMVLGIGPVLGLVSVPLLG), 88–108 (FIWALSLGVLLSLFLIPRAGW), 120–140 (LELALLILGVGLLDFCGQVCF), 161–181 (FSVYAFMISLGGCLGYLLPAI), 198–218 (CLFGLLTLIFLICMAATLFVT), 275–295 (FVAELCSWMALMTFTLFYTDF), 323–343 (MGSLGLFLQCAISLVFSLVMD), 353–373 (SVYLASVMTFPVAAAATCLSH), 382–402 (AALTGFTFSALQILPYTLASL), and 522–542 (AYMVSAAGLGLVAIYFATQVV).

The protein belongs to the glycoside-pentoside-hexuronide (GPH) cation symporter transporter (TC 2.A.2) family. As to expression, expressed in the epididymis. Primarily expressed in the prostate, but also in other tissues.

It localises to the membrane. The enzyme catalyses sucrose(out) + H(+)(out) = sucrose(in) + H(+)(in). Functionally, proton-associated sucrose transporter. May be able to transport also glucose and fructose. This chain is Solute carrier family 45 member 3 (Slc45a3), found in Mus musculus (Mouse).